The chain runs to 191 residues: Fe/S biogenesis protein NfuA (191 aa).

2 residues coordinate [4Fe-4S] cluster: Cys-149 and Cys-152.

This sequence belongs to the NfuA family. Homodimer. The cofactor is [4Fe-4S] cluster.

Involved in iron-sulfur cluster biogenesis. Binds a 4Fe-4S cluster, can transfer this cluster to apoproteins, and thereby intervenes in the maturation of Fe/S proteins. Could also act as a scaffold/chaperone for damaged Fe/S proteins. This Yersinia pseudotuberculosis serotype O:1b (strain IP 31758) protein is Fe/S biogenesis protein NfuA.